The sequence spans 285 residues: Extracellular metalloprotease SMAC_06893 (285 aa).

A signal peptide spans 1 to 18; sequence MQIKSLLLAAAAAPAALG. H197 lines the Zn(2+) pocket. E198 is a catalytic residue. H201 is a binding site for Zn(2+). A disulfide bridge connects residues C233 and C260. The N-linked (GlcNAc...) asparagine glycan is linked to N282.

Belongs to the peptidase M43B family.

The protein resides in the secreted. Secreted metalloproteinase that allows assimilation of proteinaceous substrates. The chain is Extracellular metalloprotease SMAC_06893 from Sordaria macrospora (strain ATCC MYA-333 / DSM 997 / K(L3346) / K-hell).